Here is a 910-residue protein sequence, read N- to C-terminus: MNMIQNILRVVFGSKFERDLKKLIPIVRQINSLEESIKGMDDSTLSSQTKKFKERIVQGESLDSILPEAFATVREVSLRTMGMRHFDVQMMGGIALHGGNISEMKTGEGKTLTSTLAVYLNSLAGNGVHVVTVNDYLAKRDANWMKPIYDFLGISVGVIQHDMDHEQRKVAYAADITYGTNNEFGFDYLRDNMVSHKDHKVQRSHFFAIVDEVDSILIDEARTPLIISGPSDEATDKYVRVNKIIPKLSEGEDFEVDEKARNVLLTEKGVSHVEEILSIENLYAPENVDLVHHVHQALKAHKIFRVDKDYVVQQGQVVIIDEFTGRPMEGRRYSDGLHQAIEAKENVTIAKESQTLASITFQNYFRMYDKLAGMTGTADTEAEEFKKIYNLDVIVIPPNVSVQRKDSPDRVYRTEKEKFQAILTEIRELQSKKQPVLVGTISIEKSEVLSKMLASAGIQHNVLNAKFHQKEAEIVANAGKPGAVTIATNMAGRGTDIVLGGAQLYKENLETWKDEDEIVKQFKESILRQNLEYAESLMQKMDSGTKQKRASEILSSVKIWKKNHEEVLAAGGLHILGTERHEARRIDNQLRGRSGRQGDPGSSRFYLSLQDDLMRIFGSDRISGLMKWANMPEGQEIESKMVSNAIARAQKRVEGHNFDIRKHLLEYDDVMNRQRIVIYKMRNEVLENEDISPLISGFIEETVENQIVTHCEGNNPSAWNLESLKEWSDGLDLNLQIDEVEFKKSKNPQLSLFEKVSSTAKLKYESKAEKIGKDIWKLLERNIFLDILDHRWKEHLYSMDHLREGIWTVGYSERNPLVEYKLQGFRMFDTAIENLKNEIVNFIFRVEVSENSKLPEEKKEYKKVGQEITGGFQEFSGGNLNRSQSNGSSVTVTTSSGGGTERKTSRRRKR.

Residues glutamine 89, 107–111 (GEGKT), and aspartate 496 each bind ATP. Residues 873 to 910 (QEFSGGNLNRSQSNGSSVTVTTSSGGGTERKTSRRRKR) are disordered. Positions 876 to 886 (SGGNLNRSQSN) are enriched in polar residues.

Belongs to the SecA family. As to quaternary structure, monomer and homodimer. Part of the essential Sec protein translocation apparatus which comprises SecA, SecYEG and auxiliary proteins SecDF. Other proteins may also be involved.

Its subcellular location is the cell inner membrane. It is found in the cytoplasm. The enzyme catalyses ATP + H2O + cellular proteinSide 1 = ADP + phosphate + cellular proteinSide 2.. In terms of biological role, part of the Sec protein translocase complex. Interacts with the SecYEG preprotein conducting channel. Has a central role in coupling the hydrolysis of ATP to the transfer of proteins into and across the cell membrane, serving as an ATP-driven molecular motor driving the stepwise translocation of polypeptide chains across the membrane. The protein is Protein translocase subunit SecA of Leptospira interrogans serogroup Icterohaemorrhagiae serovar copenhageni (strain Fiocruz L1-130).